Consider the following 286-residue polypeptide: Bifunctional protein FolD (286 aa).

Residues 166–168 (GAS) and isoleucine 232 contribute to the NADP(+) site.

The protein belongs to the tetrahydrofolate dehydrogenase/cyclohydrolase family. In terms of assembly, homodimer.

The catalysed reaction is (6R)-5,10-methylene-5,6,7,8-tetrahydrofolate + NADP(+) = (6R)-5,10-methenyltetrahydrofolate + NADPH. It catalyses the reaction (6R)-5,10-methenyltetrahydrofolate + H2O = (6R)-10-formyltetrahydrofolate + H(+). Its pathway is one-carbon metabolism; tetrahydrofolate interconversion. Functionally, catalyzes the oxidation of 5,10-methylenetetrahydrofolate to 5,10-methenyltetrahydrofolate and then the hydrolysis of 5,10-methenyltetrahydrofolate to 10-formyltetrahydrofolate. This is Bifunctional protein FolD from Blochmanniella pennsylvanica (strain BPEN).